The sequence spans 206 residues: Acidic proline-rich protein PRP33 (206 aa).

The first 13 residues, 1–13 (MLVVLLTAALLVL), serve as a signal peptide directing secretion. The disordered stretch occupies residues 15–206 (SAHGSDEEVI…EQPSYLWFSS (192 aa)). The span at 55–71 (ENGDGDDSDDGDDDGSG) shows a compositional bias: acidic residues. A run of 6 repeats spans residues 80–97 (PPPH…HHHG), 98–115 (PPPS…NPQG), 116–133 (PPPQ…NPQG), 134–152 (PPPQ…KPQG), 153–170 (PPPQ…NPQG), and 171–189 (PPPQ…KPQD). The interval 80–189 (PPPHGGNHQR…RPPQPRKPQD (110 aa)) is 6 X 18 AA approximate tandem repeats. A compositionally biased stretch (low complexity) spans 103-112 (GPQTSSQPGN). Residues 113–174 (PQGPPPQGGP…PGNPQGPPPQ (62 aa)) show a composition bias toward pro residues.

It localises to the secreted. May protect teeth by binding to tannins. The chain is Acidic proline-rich protein PRP33 (Prpg1) from Rattus norvegicus (Rat).